The sequence spans 132 residues: Small ribosomal subunit protein uS12 (132 aa).

Asp89 is subject to 3-methylthioaspartic acid. The segment at 101-132 (TLDASGAAGPSSTNKATRNRKRSKYGVKRPKA) is disordered. Residues 117–132 (TRNRKRSKYGVKRPKA) show a composition bias toward basic residues.

It belongs to the universal ribosomal protein uS12 family. As to quaternary structure, part of the 30S ribosomal subunit. Contacts proteins S8 and S17. May interact with IF1 in the 30S initiation complex.

Functionally, with S4 and S5 plays an important role in translational accuracy. Interacts with and stabilizes bases of the 16S rRNA that are involved in tRNA selection in the A site and with the mRNA backbone. Located at the interface of the 30S and 50S subunits, it traverses the body of the 30S subunit contacting proteins on the other side and probably holding the rRNA structure together. The combined cluster of proteins S8, S12 and S17 appears to hold together the shoulder and platform of the 30S subunit. This chain is Small ribosomal subunit protein uS12, found in Sorangium cellulosum (strain So ce56) (Polyangium cellulosum (strain So ce56)).